A 465-amino-acid polypeptide reads, in one-letter code: Serine carboxypeptidase-like 19 (465 aa).

An N-terminal signal peptide occupies residues 1 to 23; it reads MRNLSFIVLFLLTLFFIHHLVDA. 77–79 is a binding site for substrate; it reads TGG. 3 disulfides stabilise this stretch: Cys-82–Cys-353, Cys-246–Cys-260, and Cys-284–Cys-320. An N-linked (GlcNAc...) asparagine glycan is attached at Asn-103. Substrate is bound at residue 177–179; sequence DSY. Ser-178 is a catalytic residue. Positions 292–317 are cleaved as a propeptide — linker peptide; that stretch reads DTPNIRTDRRRVMKEFSVNDSSSLPP. N-linked (GlcNAc...) asparagine glycosylation is found at Asn-310 and Asn-373. The active site involves Asp-389. A glycan (N-linked (GlcNAc...) asparagine) is linked at Asn-405. Substrate is bound at residue 439-443; that stretch reads KGGGH. His-443 is a catalytic residue.

The protein belongs to the peptidase S10 family. In terms of assembly, heterodimer. In terms of processing, N-glycosylated. As to expression, expressed in roots and flowers, and at lower levels in young leaves and seedlings. Expressed in mature seeds and detected in expanding siliques.

Its subcellular location is the secreted. The enzyme catalyses 1-O-(trans-sinapoyl)-beta-D-glucose + choline = O-sinapoylcholine + D-glucose. Slightly inhibited by phenylmethylsulfonyl fluoride (PMSF). Involved in plants secondary metabolism. Functions as acyltransferase to form the sinapate ester sinapoylcholine also known as sinapine. Able to convert in vitro benzoylglucose into benzoylcholine. This chain is Serine carboxypeptidase-like 19, found in Arabidopsis thaliana (Mouse-ear cress).